The chain runs to 517 residues: UPF0522 protein B (517 aa).

Residues 1-19 form the signal peptide; sequence MNKTIILLLISIIFEIVIS. N-linked (GlcNAc...) asparagine glycans are attached at residues Asn148, Asn245, Asn333, Asn345, Asn370, Asn423, Asn432, and Asn495.

Belongs to the UPF0522 family.

It is found in the secreted. This chain is UPF0522 protein B, found in Dictyostelium discoideum (Social amoeba).